Reading from the N-terminus, the 151-residue chain is Protein SprT-like (151 aa).

The SprT-like domain maps to 7–146 (QSLTESIAIK…CGRCGGILKL (140 aa)). His-67 is a binding site for Zn(2+). The active site involves Glu-68. Zn(2+) is bound at residue His-71.

Belongs to the SprT family. Zn(2+) serves as cofactor.

The protein resides in the cytoplasm. In Staphylococcus epidermidis (strain ATCC 35984 / DSM 28319 / BCRC 17069 / CCUG 31568 / BM 3577 / RP62A), this protein is Protein SprT-like.